The chain runs to 225 residues: Ribosomal RNA small subunit methyltransferase G (225 aa).

Residues Gly-89, Leu-94, Ile-140–Glu-141, and Arg-157 contribute to the S-adenosyl-L-methionine site.

It belongs to the methyltransferase superfamily. RNA methyltransferase RsmG family.

Its subcellular location is the cytoplasm. It catalyses the reaction guanosine(527) in 16S rRNA + S-adenosyl-L-methionine = N(7)-methylguanosine(527) in 16S rRNA + S-adenosyl-L-homocysteine. Functionally, specifically methylates the N7 position of guanine in position 527 of 16S rRNA. The protein is Ribosomal RNA small subunit methyltransferase G of Psychrobacter sp. (strain PRwf-1).